Reading from the N-terminus, the 349-residue chain is Phenylalanine--tRNA ligase alpha subunit (349 aa).

Glu259 lines the Mg(2+) pocket.

This sequence belongs to the class-II aminoacyl-tRNA synthetase family. Phe-tRNA synthetase alpha subunit type 1 subfamily. In terms of assembly, tetramer of two alpha and two beta subunits. The cofactor is Mg(2+).

It is found in the cytoplasm. It catalyses the reaction tRNA(Phe) + L-phenylalanine + ATP = L-phenylalanyl-tRNA(Phe) + AMP + diphosphate + H(+). This is Phenylalanine--tRNA ligase alpha subunit from Lactobacillus delbrueckii subsp. bulgaricus (strain ATCC 11842 / DSM 20081 / BCRC 10696 / JCM 1002 / NBRC 13953 / NCIMB 11778 / NCTC 12712 / WDCM 00102 / Lb 14).